Here is a 412-residue protein sequence, read N- to C-terminus: Histidinol dehydrogenase (412 aa).

NAD(+)-binding residues include Tyr-118, Gln-176, and Asn-199. Substrate-binding residues include Thr-222, Gln-244, and His-247. Zn(2+) contacts are provided by Gln-244 and His-247. Active-site proton acceptor residues include Glu-311 and His-312. His-312, Asp-345, Glu-399, and His-404 together coordinate substrate. A Zn(2+)-binding site is contributed by Asp-345. His-404 is a Zn(2+) binding site.

Belongs to the histidinol dehydrogenase family. Zn(2+) serves as cofactor.

It catalyses the reaction L-histidinol + 2 NAD(+) + H2O = L-histidine + 2 NADH + 3 H(+). The protein operates within amino-acid biosynthesis; L-histidine biosynthesis; L-histidine from 5-phospho-alpha-D-ribose 1-diphosphate: step 9/9. Its function is as follows. Catalyzes the sequential NAD-dependent oxidations of L-histidinol to L-histidinaldehyde and then to L-histidine. The polypeptide is Histidinol dehydrogenase (Thermus thermophilus (strain ATCC BAA-163 / DSM 7039 / HB27)).